The sequence spans 1709 residues: Hybrid signal transduction histidine kinase L (1709 aa).

Disordered regions lie at residues 52 to 192, 206 to 276, 413 to 535, and 554 to 615; these read SNNN…SPPH, FFSG…NSSD, TSNS…NNSC, and QQQQ…IFNN. Over residues 53-87 the composition is skewed to low complexity; the sequence is NNNNNNNNNNNNNNNNNNNNNNNNNNNNNNNNNNN. A compositionally biased stretch (basic and acidic residues) spans 88–100; that stretch reads NEEKSNNETEKTL. Over residues 106–148 the composition is skewed to low complexity; that stretch reads TTTTTTTNNNNNNNNNNNNNNNNNNNNNNNNNNNNNNNNNNTN. The span at 149–170 shows a compositional bias: polar residues; that stretch reads SSNDIYMNSPSSTLSSPGNAGN. Composition is skewed to low complexity over residues 413–466, 486–535, and 554–576; these read TSNS…TPNS, NNSP…NNSC, and QQQQQQQSQPTTPTQSTQSPTTS. Positions 585-610 are enriched in polar residues; sequence LTINTSFKTSPMSSPKSFNKPSQSPQ. In terms of domain architecture, PAS spans 700–771; it reads ATRKMVTCIE…ATLTDKKTWN (72 aa). The region spanning 770 to 822 is the PAC domain; the sequence is WNGFIRTRHNNNTLIYFEASISPVLDQFQQILYYNCTKRDVTQKRIDEESKTL. The region spanning 837-1059 is the Histidine kinase domain; that stretch reads MMSHDIRTPM…TFTCILKFKK (223 aa). Phosphohistidine; by autocatalysis is present on histidine 840. Disordered stretches follow at residues 1068 to 1112 and 1137 to 1298; these read LLPA…HQQH and QHQL…PTSP. Low complexity-rich tracts occupy residues 1075-1112, 1137-1153, and 1176-1194; these read LQQQQQQQQHQQQTQFHQHQQQTQFHQHQQQQLQHQQH, QHQLQQRQHHQQQLQQQ, and NQHIQQQQQQQQQQQQQQQ. A compositionally biased stretch (basic residues) spans 1204–1221; it reads HNSHGHNHHGSHHNHNHQ. Polar residues-rich tracts occupy residues 1244-1257 and 1275-1298; these read NEQQLESITENSFS and NISQSPSPQSIHNGTTINQQPTSP. 2 consecutive Response regulatory domains span residues 1312–1492 and 1570–1692; these read KMLF…MMYL and KVLV…KKYG. Position 1366 is a 4-aspartylphosphate (aspartate 1366). 2 stretches are compositionally biased toward low complexity: residues 1390–1412 and 1420–1440; these read QHLQQQQEQEQQQQQEQQQSELQ and KNSSQNNDNNNNNNKSNSSGG. The tract at residues 1390 to 1440 is disordered; it reads QHLQQQQEQEQQQQQEQQQSELQKQPDVENKNSSQNNDNNNNNNKSNSSGG. Aspartate 1622 carries the post-translational modification 4-aspartylphosphate.

In terms of processing, activation probably requires transfer of a phosphate group between a histidine in the kinase core (transmitter) domain and an aspartate of the receiver domain.

It catalyses the reaction ATP + protein L-histidine = ADP + protein N-phospho-L-histidine.. Acts as a receptor histidine kinase for a signal transduction pathway. This protein undergoes an ATP-dependent autophosphorylation at a conserved histidine residue in the kinase core, and a phosphoryl group is then transferred to a conserved aspartate residue in the receiver domain. The chain is Hybrid signal transduction histidine kinase L (dhkL) from Dictyostelium discoideum (Social amoeba).